Here is a 773-residue protein sequence, read N- to C-terminus: DNA gyrase subunit B (773 aa).

The Toprim domain maps to 416-530 (SEIFLVEGDS…QGHVYIAQAP (115 aa)). Glu-422, Asp-495, and Asp-497 together coordinate Mg(2+).

It belongs to the type II topoisomerase GyrB family. Heterotetramer, composed of two GyrA and two GyrB chains. In the heterotetramer, GyrA contains the active site tyrosine that forms a transient covalent intermediate with DNA, while GyrB binds cofactors and catalyzes ATP hydrolysis. Requires Mg(2+) as cofactor. Mn(2+) serves as cofactor. Ca(2+) is required as a cofactor.

The protein resides in the cytoplasm. It catalyses the reaction ATP-dependent breakage, passage and rejoining of double-stranded DNA.. Its function is as follows. A type II topoisomerase that negatively supercoils closed circular double-stranded (ds) DNA in an ATP-dependent manner to modulate DNA topology and maintain chromosomes in an underwound state. Negative supercoiling favors strand separation, and DNA replication, transcription, recombination and repair, all of which involve strand separation. Also able to catalyze the interconversion of other topological isomers of dsDNA rings, including catenanes and knotted rings. Type II topoisomerases break and join 2 DNA strands simultaneously in an ATP-dependent manner. This Helicobacter pylori (strain ATCC 700392 / 26695) (Campylobacter pylori) protein is DNA gyrase subunit B.